Here is a 268-residue protein sequence, read N- to C-terminus: Ribosomal RNA small subunit methyltransferase A (268 aa).

Residues N23, L25, G50, E72, D94, and N116 each contribute to the S-adenosyl-L-methionine site.

Belongs to the class I-like SAM-binding methyltransferase superfamily. rRNA adenine N(6)-methyltransferase family. RsmA subfamily.

Its subcellular location is the cytoplasm. It catalyses the reaction adenosine(1518)/adenosine(1519) in 16S rRNA + 4 S-adenosyl-L-methionine = N(6)-dimethyladenosine(1518)/N(6)-dimethyladenosine(1519) in 16S rRNA + 4 S-adenosyl-L-homocysteine + 4 H(+). Its function is as follows. Specifically dimethylates two adjacent adenosines (A1518 and A1519) in the loop of a conserved hairpin near the 3'-end of 16S rRNA in the 30S particle. May play a critical role in biogenesis of 30S subunits. The sequence is that of Ribosomal RNA small subunit methyltransferase A from Mycoplasmoides gallisepticum (strain R(low / passage 15 / clone 2)) (Mycoplasma gallisepticum).